A 256-amino-acid chain; its full sequence is Protein YIPF5 (256 aa).

Topologically, residues 1 to 125 (MSNFDNFNTD…ADGSIMNETD (125 aa)) are cytoplasmic. Residues 126–146 (LAGPMVFCLAFGATLLLAGKI) form a helical membrane-spanning segment. Position 147 (Gln-147) is a topological domain, lumenal. A helical membrane pass occupies residues 148–168 (FGYVYGISAMGCLGMYCLLNL). Residues 169 to 172 (MSMT) are Cytoplasmic-facing. A helical transmembrane segment spans residues 173 to 193 (GVSFGCVSSVLGYCLLPMIIL). At 194 to 195 (ST) the chain is on the lumenal side. The helical transmembrane segment at 196-216 (FAVIFSLQGILGIVLAALIIG) threads the bilayer. At 217-235 (WCSFSASKIFISALAMDGQ) the chain is on the cytoplasmic side. The chain crosses the membrane as a helical span at residues 236 to 256 (QLLVAYPCALLYGVFALISVF).

Belongs to the YIP1 family.

It localises to the endoplasmic reticulum membrane. It is found in the golgi apparatus. The protein localises to the cis-Golgi network membrane. In terms of biological role, plays a role in transport between endoplasmic reticulum and Golgi. In Xenopus laevis (African clawed frog), this protein is Protein YIPF5 (yipf5).